Reading from the N-terminus, the 594-residue chain is Estrogen receptor (594 aa).

Residues 1-184 (MTMTLHTKAS…AMESAKETRY (184 aa)) are modulating (transactivation AF-1); mediates interaction with MACROD1. Serine 10 is a glycosylation site (O-linked (GlcNAc) serine). Residues 35–47 (LERPLGEVYVESS) are required for interaction with NCOA1. Positions 35–174 (LERPLGEVYV…LASSGDKGSM (140 aa)) are interaction with DDX5; self-association. Phosphoserine; by CDK2 is present on residues serine 104 and serine 106. Position 118 is a phosphoserine (serine 118). Residues 152 to 173 (PNADNRRQGGRERLASSGDKGS) form a disordered region. The segment covering 154 to 165 (ADNRRQGGRERL) has biased composition (basic and acidic residues). The residue at position 167 (serine 167) is a Phosphoserine; by CK2. NR C4-type zinc fingers lie at residues 185-205 (CAVCNDYASGYHYGVWSCEGC) and 221-245 (CPATNQCTIDKNRRKSCQACRLRKC). The nuclear receptor DNA-binding region spans 185–250 (CAVCNDYASG…RLRKCYEVGM (66 aa)). Residues 185–310 (CAVCNDYASG…TKKISPVLSL (126 aa)) are mediates interaction with DNTTIP2. Residues 251-310 (MKGGIRKDRRGGRMLKHKRQRDDGEGRNEAGPSGDRRPANFWPSPLLIKHTKKISPVLSL) are hinge. Basic residues predominate over residues 257 to 269 (KDRRGGRMLKHKR). The disordered stretch occupies residues 257-293 (KDRRGGRMLKHKRQRDDGEGRNEAGPSGDRRPANFWP). Position 260 is an asymmetric dimethylarginine; by PRMT1 (arginine 260). Residues 262–594 (GRMLKHKRQR…GEAEGFPNTI (333 aa)) form an interaction with AKAP13 region. The tract at residues 264–594 (MLKHKRQRDD…GEAEGFPNTI (331 aa)) is self-association. A compositionally biased stretch (basic and acidic residues) spans 270–288 (QRDDGEGRNEAGPSGDRRP). The region spanning 311–546 (TAEQMISALL…DLLLEMLDAH (236 aa)) is the NR LBD domain. Positions 311-594 (TAEQMISALL…GEAEGFPNTI (284 aa)) are transactivation AF-2. Residues glutamate 353 and arginine 394 each contribute to the 17beta-estradiol site. Residue cysteine 447 is the site of S-palmitoyl cysteine attachment. Histidine 523 contacts 17beta-estradiol. Residue tyrosine 536 is modified to Phosphotyrosine; by Tyr-kinases. A disordered region spans residues 551–575 (PANHGGAPMEETNQSQLATTGSTSP). A compositionally biased stretch (polar residues) spans 561–575 (ETNQSQLATTGSTSP). Residue threonine 570 is glycosylated (O-linked (GlcNAc) threonine).

This sequence belongs to the nuclear hormone receptor family. NR3 subfamily. As to quaternary structure, binds DNA as a homodimer. Can form a heterodimer with ESR2. Interacts with coactivator NCOA5. Interacts with PELP1, the interaction is enhanced by 17-beta-estradiol; the interaction increases ESR1 transcriptional activity. Interacts with NCOA7; the interaction is ligand-inducible. Interacts with AKAP13, CUEDC2, HEXIM1, KDM5A, MAP1S, SMARD1, and UBE1C. Interacts with MUC1; the interaction is stimulated by 7 beta-estradiol (E2) and enhances ESR1-mediated transcription. Interacts with DNTTIP2, and UIMC1. Interacts with KMT2D/MLL2. Interacts with ATAD2; the interaction is enhanced by estradiol. Interacts with KIF18A and LDB1. Interacts with RLIM (via its C-terminus). Interacts with MACROD1. Interacts with SH2D4A and PLCG. Interacts with SH2D4A; the interaction blocks binding to PLCG and inhibits estrogen-induced cell proliferation. Interacts with DYNLL1. Interacts with CCDC62; the interaction requires estradiol and appears to enhance the transcription of target genes. Interacts with NR2C1; the interaction prevents homodimerization of ESR1 and suppresses its transcriptional activity and cell growth. Interacts with DNAAF4. Interacts with PRMT2. Interacts with RBFOX2. Interacts with EP300; the interaction is estrogen-dependent and enhanced by CITED1. Interacts with CITED1; the interaction is estrogen-dependent. Interacts with FAM120B, FOXL2, PHB2 and SLC30A9. Interacts with coactivators NCOA3 and NCOA6. Interacts with STK3/MST2 only in the presence of SAV1 and vice-versa. Binds to CSNK1D. Interacts with NCOA2; NCOA2 can interact with ESR1 AF-1 and AF-2 domains simultaneously and mediate their transcriptional synergy. Interacts with DDX5. Interacts with NCOA1; the interaction seems to require a self-association of N-terminal and C-terminal regions. Interacts with ZNF366, DDX17, NFKB1, RELA, SP1 and SP3. Interacts with NRIP1. Interacts with GPER1; the interaction occurs in an estrogen-dependent manner. Interacts with CLOCK and the interaction is stimulated by estrogen. Interacts with TRIP4 (ufmylated); estrogen dependent. Interacts with LMTK3; the interaction phosphorylates ESR1 (in vitro) and protects it against proteasomal degradation. Interacts with CCAR2 (via N-terminus) in a ligand-independent manner. Interacts with ZFHX3. Interacts with SFR1 in a ligand-dependent and -independent manner. Interacts with DCAF13, LATS1 and DCAF1; regulates ESR1 ubiquitination and ubiquitin-mediated proteasomal degradation. Interacts (via DNA-binding domain) with POU4F2 (C-terminus); this interaction increases the estrogen receptor ESR1 transcriptional activity in a DNA- and ligand 17-beta-estradiol-independent manner. Interacts with ESRRB isoform 1. Interacts with UBE3A and WBP2. Interacts with GTF2B. Interacts with RBM39. In the absence of hormonal ligand, interacts with TACC1. Interacts with PI3KR1 or PI3KR2 and PTK2/FAK1. Interacts with SRC. Interacts with BAG1; the interaction is promoted in the absence of estradiol (17-beta-estradiol/E2). Interacts with and ubiquitinated by STUB1; the interaction is promoted in the absence of estradiol (17-beta-estradiol/E2). Interacts with NEDD8. In terms of processing, ubiquitinated; regulated by LATS1 via DCAF1 it leads to ESR1 proteasomal degradation. Deubiquitinated by OTUB1. Ubiquitinated by STUB1/CHIP; in the CA1 hippocampal region following loss of endogenous circulating estradiol (17-beta-estradiol/E2). Ubiquitinated by UBR5, leading to its degradation: UBR5 specifically recognizes and binds ligand-bound ESR1 when it is not associated with coactivators (NCOAs). In presence of NCOAs, the UBR5-degron is not accessible, preventing its ubiquitination and degradation. Phosphorylated by cyclin A/CDK2 and CK1. Phosphorylation probably enhances transcriptional activity. Dephosphorylation at Ser-118 by PPP5C inhibits its transactivation activity. Phosphorylated by LMTK3 (in vitro). Post-translationally, palmitoylated at Cys-447 by ZDHHC7 and ZDHHC21. Palmitoylation is required for plasma membrane targeting and for rapid intracellular signaling via ERK and AKT kinases and cAMP generation, but not for signaling mediated by the nuclear hormone receptor. In terms of processing, dimethylated by PRMT1 at Arg-260. The methylation may favor cytoplasmic localization. Demethylated by JMJD6 at Arg-260.

It is found in the nucleus. The protein localises to the cytoplasm. Its subcellular location is the golgi apparatus. The protein resides in the cell membrane. In terms of biological role, nuclear hormone receptor. The steroid hormones and their receptors are involved in the regulation of eukaryotic gene expression and affect cellular proliferation and differentiation in target tissues. Ligand-dependent nuclear transactivation involves either direct homodimer binding to a palindromic estrogen response element (ERE) sequence or association with other DNA-binding transcription factors, such as AP-1/c-Jun, c-Fos, ATF-2, Sp1 and Sp3, to mediate ERE-independent signaling. Ligand binding induces a conformational change allowing subsequent or combinatorial association with multiprotein coactivator complexes through LXXLL motifs of their respective components. Mutual transrepression occurs between the estrogen receptor (ER) and NF-kappa-B in a cell-type specific manner. Decreases NF-kappa-B DNA-binding activity and inhibits NF-kappa-B-mediated transcription from the IL6 promoter and displace RELA/p65 and associated coregulators from the promoter. Recruited to the NF-kappa-B response element of the CCL2 and IL8 promoters and can displace CREBBP. Present with NF-kappa-B components RELA/p65 and NFKB1/p50 on ERE sequences. Can also act synergistically with NF-kappa-B to activate transcription involving respective recruitment adjacent response elements; the function involves CREBBP. Can activate the transcriptional activity of TFF1. Also mediates membrane-initiated estrogen signaling involving various kinase cascades. Essential for MTA1-mediated transcriptional regulation of BRCA1 and BCAS3. Maintains neuronal survival in response to ischemic reperfusion injury when in the presence of circulating estradiol (17-beta-estradiol/E2). In Equus caballus (Horse), this protein is Estrogen receptor (ESR1).